The chain runs to 292 residues: 5,10-methylenetetrahydrofolate reductase (292 aa).

The Proton donor/acceptor role is filled by E28. T59 is an NADH binding site. Y60, A62, H88, R118, G119, D120, A132, Y152, H156, D165, N168, K171, and K172 together coordinate FAD. D120 lines the (6S)-5-methyl-5,6,7,8-tetrahydrofolate pocket. Residue Q183 participates in NADH binding. Q183 is a (6S)-5-methyl-5,6,7,8-tetrahydrofolate binding site.

It belongs to the methylenetetrahydrofolate reductase family. FAD is required as a cofactor.

The catalysed reaction is (6S)-5-methyl-5,6,7,8-tetrahydrofolate + NAD(+) = (6R)-5,10-methylene-5,6,7,8-tetrahydrofolate + NADH + H(+). It functions in the pathway one-carbon metabolism; tetrahydrofolate interconversion. It participates in amino-acid biosynthesis; L-methionine biosynthesis via de novo pathway. Functionally, catalyzes the NADH-dependent reduction of 5,10-methylenetetrahydrofolate to 5-methyltetrahydrofolate. Is required to provide the methyl group necessary for methionine synthetase to convert homocysteine to methionine; the methyl group is given by 5-methyltetrahydrofolate. The chain is 5,10-methylenetetrahydrofolate reductase (metF) from Buchnera aphidicola subsp. Acyrthosiphon pisum (strain APS) (Acyrthosiphon pisum symbiotic bacterium).